We begin with the raw amino-acid sequence, 478 residues long: MARLNRNDPQLVGTLLPTRIEADLFDLEVDGEIPKSINGTFYRNTPEPQVTPQKFHTFIDGDGMASAFHFEDGHVDFISRWVKTARFTAERLARKSLFGMYRNPYTDDTSVKGLDRTVANTSIISHHGKVLAVKEDGLPYELDPRTLETRGRFDYDGQVTSQTHTAHPKYDPETGDLLFFGSAAKGEATPDMAYYIVDKHGKVTHETWFEQPYGAFMHDFAITRNWSIFPIMPATNSLSRLKAKQPIYMWEPELGSYIGVLPRRGQGSQIRWLKAPALWVFHVVNAWEVGTKIYIDLMESEILPFPFPNSQNQPFAPEKAVPRLTRWEIDLDSSSDEIKRTRLHDFFAEMPIMDFRFALQCNRYGFMGVDDPRKPLAHQQAEKIFAYNSLGIWDNHRGDYDLWYSGEASAAQEPAFVPRSPTAAEGDGYLLTVVGRLDENRSDLVILDTQDIQSGPVATIKLPFRLRAALHGCWVPRP.

Residues His167, His218, His282, and His471 each coordinate Fe cation.

This sequence belongs to the carotenoid oxygenase family. Requires Fe(2+) as cofactor.

The catalysed reaction is (E)-isoeugenol + O2 = vanillin + acetaldehyde. Its activity is regulated as follows. Inhibited by Co(2+), Ni(2+) and Zn(2+), which may inhibit enzyme activity by replacing iron in the catalytic residues. Inhibited by incubation with high concentrations of the iron chelators 1,10-phenanthroline and Tiron. However, iron is not completely removed by the chelators, suggesting that iron is tightly bound to the enzyme. In terms of biological role, involved in isoeugenol degradation. Catalyzes the oxidative cleavage of the side chain double-bond of isoeugenol to form vanillin and acetaldehyde. The sequence is that of Isoeugenol monooxygenase from Pseudomonas nitroreducens.